Here is a 352-residue protein sequence, read N- to C-terminus: Probable dual-specificity RNA methyltransferase RlmN (352 aa).

The active-site Proton acceptor is glutamate 93. The region spanning 99-332 (TAKRLTVCVS…ATVRQTRGLD (234 aa)) is the Radical SAM core domain. Cysteine 106 and cysteine 337 are joined by a disulfide. [4Fe-4S] cluster-binding residues include cysteine 113, cysteine 117, and cysteine 120. S-adenosyl-L-methionine-binding positions include 160 to 161 (GE), serine 190, 213 to 215 (SLH), and asparagine 294. Residue cysteine 337 is the S-methylcysteine intermediate of the active site.

The protein belongs to the radical SAM superfamily. RlmN family. The cofactor is [4Fe-4S] cluster.

It localises to the cytoplasm. It carries out the reaction adenosine(2503) in 23S rRNA + 2 reduced [2Fe-2S]-[ferredoxin] + 2 S-adenosyl-L-methionine = 2-methyladenosine(2503) in 23S rRNA + 5'-deoxyadenosine + L-methionine + 2 oxidized [2Fe-2S]-[ferredoxin] + S-adenosyl-L-homocysteine. It catalyses the reaction adenosine(37) in tRNA + 2 reduced [2Fe-2S]-[ferredoxin] + 2 S-adenosyl-L-methionine = 2-methyladenosine(37) in tRNA + 5'-deoxyadenosine + L-methionine + 2 oxidized [2Fe-2S]-[ferredoxin] + S-adenosyl-L-homocysteine. Specifically methylates position 2 of adenine 2503 in 23S rRNA and position 2 of adenine 37 in tRNAs. The chain is Probable dual-specificity RNA methyltransferase RlmN from Synechococcus sp. (strain JA-2-3B'a(2-13)) (Cyanobacteria bacterium Yellowstone B-Prime).